Consider the following 388-residue polypeptide: Chorismate synthase (388 aa).

R39 and R45 together coordinate NADP(+). FMN contacts are provided by residues 130–132 (RSS), 251–252 (NA), G296, 311–315 (KPIPT), and R337.

This sequence belongs to the chorismate synthase family. Homotetramer. The cofactor is FMNH2.

It catalyses the reaction 5-O-(1-carboxyvinyl)-3-phosphoshikimate = chorismate + phosphate. Its pathway is metabolic intermediate biosynthesis; chorismate biosynthesis; chorismate from D-erythrose 4-phosphate and phosphoenolpyruvate: step 7/7. Its function is as follows. Catalyzes the anti-1,4-elimination of the C-3 phosphate and the C-6 proR hydrogen from 5-enolpyruvylshikimate-3-phosphate (EPSP) to yield chorismate, which is the branch point compound that serves as the starting substrate for the three terminal pathways of aromatic amino acid biosynthesis. This reaction introduces a second double bond into the aromatic ring system. In Streptococcus pneumoniae serotype 19F (strain G54), this protein is Chorismate synthase.